A 110-amino-acid chain; its full sequence is Large ribosomal subunit protein uL22 (110 aa).

The protein belongs to the universal ribosomal protein uL22 family. In terms of assembly, part of the 50S ribosomal subunit.

In terms of biological role, this protein binds specifically to 23S rRNA; its binding is stimulated by other ribosomal proteins, e.g. L4, L17, and L20. It is important during the early stages of 50S assembly. It makes multiple contacts with different domains of the 23S rRNA in the assembled 50S subunit and ribosome. Its function is as follows. The globular domain of the protein is located near the polypeptide exit tunnel on the outside of the subunit, while an extended beta-hairpin is found that lines the wall of the exit tunnel in the center of the 70S ribosome. The protein is Large ribosomal subunit protein uL22 of Glaesserella parasuis serovar 5 (strain SH0165) (Haemophilus parasuis).